The chain runs to 256 residues: Ubiquinone/menaquinone biosynthesis C-methyltransferase UbiE (256 aa).

Residues 1–19 (MQNRSSSPDSSSAGNTHFG) show a composition bias toward polar residues. Residues 1–24 (MQNRSSSPDSSSAGNTHFGFQSVP) form a disordered region. S-adenosyl-L-methionine contacts are provided by residues Thr-81, Asp-102, and 128-129 (DA).

The protein belongs to the class I-like SAM-binding methyltransferase superfamily. MenG/UbiE family.

It carries out the reaction a 2-demethylmenaquinol + S-adenosyl-L-methionine = a menaquinol + S-adenosyl-L-homocysteine + H(+). It catalyses the reaction a 2-methoxy-6-(all-trans-polyprenyl)benzene-1,4-diol + S-adenosyl-L-methionine = a 5-methoxy-2-methyl-3-(all-trans-polyprenyl)benzene-1,4-diol + S-adenosyl-L-homocysteine + H(+). The protein operates within quinol/quinone metabolism; menaquinone biosynthesis; menaquinol from 1,4-dihydroxy-2-naphthoate: step 2/2. It participates in cofactor biosynthesis; ubiquinone biosynthesis. Functionally, methyltransferase required for the conversion of demethylmenaquinol (DMKH2) to menaquinol (MKH2) and the conversion of 2-polyprenyl-6-methoxy-1,4-benzoquinol (DDMQH2) to 2-polyprenyl-3-methyl-6-methoxy-1,4-benzoquinol (DMQH2). In Bordetella avium (strain 197N), this protein is Ubiquinone/menaquinone biosynthesis C-methyltransferase UbiE.